Here is a 632-residue protein sequence, read N- to C-terminus: Probable potassium transport system protein Kup 1 (632 aa).

12 consecutive transmembrane segments (helical) span residues 19 to 39 (LVLG…LYAL), 59 to 79 (VISM…VVFV), 110 to 130 (VLMM…VITP), 146 to 166 (PQLS…LFLI), 178 to 198 (FGPI…LHLV), 213 to 233 (ITFL…VFLV), 256 to 276 (WFVL…AMLL), 298 to 318 (MVLL…SGAF), 346 to 366 (IYLP…VISF), 373 to 393 (AAAY…LAAV), 403 to 423 (PALV…FFAA), and 428 to 448 (VAEG…LLMT).

It belongs to the HAK/KUP transporter (TC 2.A.72) family.

It is found in the cell inner membrane. The enzyme catalyses K(+)(in) + H(+)(in) = K(+)(out) + H(+)(out). In terms of biological role, transport of potassium into the cell. Likely operates as a K(+):H(+) symporter. In Cupriavidus necator (strain ATCC 17699 / DSM 428 / KCTC 22496 / NCIMB 10442 / H16 / Stanier 337) (Ralstonia eutropha), this protein is Probable potassium transport system protein Kup 1.